Reading from the N-terminus, the 600-residue chain is Putative dehydrogenase XoxF (600 aa).

The first 21 residues, 1–21, serve as a signal peptide directing secretion; that stretch reads MKNLMNGACLALLMSGTAALA. Ca(2+) is bound by residues Glu192 and Asn276. Residue Asp318 is the Proton acceptor of the active site.

It belongs to the bacterial PQQ dehydrogenase family. Requires pyrroloquinoline quinone as cofactor. It depends on Ca(2+) as a cofactor.

The sequence is that of Putative dehydrogenase XoxF (xoxF) from Paracoccus denitrificans.